Reading from the N-terminus, the 299-residue chain is Bifunctional protein FolD 2 (299 aa).

NADP(+) contacts are provided by residues 168 to 170, Ser193, and Ile234; that span reads GRS.

Belongs to the tetrahydrofolate dehydrogenase/cyclohydrolase family. In terms of assembly, homodimer.

It catalyses the reaction (6R)-5,10-methylene-5,6,7,8-tetrahydrofolate + NADP(+) = (6R)-5,10-methenyltetrahydrofolate + NADPH. The enzyme catalyses (6R)-5,10-methenyltetrahydrofolate + H2O = (6R)-10-formyltetrahydrofolate + H(+). The protein operates within one-carbon metabolism; tetrahydrofolate interconversion. Its function is as follows. Catalyzes the oxidation of 5,10-methylenetetrahydrofolate to 5,10-methenyltetrahydrofolate and then the hydrolysis of 5,10-methenyltetrahydrofolate to 10-formyltetrahydrofolate. The sequence is that of Bifunctional protein FolD 2 from Rhizobium meliloti (strain 1021) (Ensifer meliloti).